The sequence spans 296 residues: uncharacterized protein (296 aa).

Transmembrane regions (helical) follow at residues 1–21, 30–50, 71–91, 92–112, 113–133, and 142–162; these read MVNL…IFDY, LITA…GFWL, FISF…FVLC, LAQL…STLA, IGLA…LVLF, and IEVA…TTIC.

It belongs to the MscS (TC 1.A.23) family.

It is found in the cell membrane. This is an uncharacterized protein from Synechocystis sp. (strain ATCC 27184 / PCC 6803 / Kazusa).